Here is a 156-residue protein sequence, read N- to C-terminus: Small ribosomal subunit protein uS7 (156 aa).

Belongs to the universal ribosomal protein uS7 family. Part of the 30S ribosomal subunit. Contacts proteins S9 and S11.

Functionally, one of the primary rRNA binding proteins, it binds directly to 16S rRNA where it nucleates assembly of the head domain of the 30S subunit. Is located at the subunit interface close to the decoding center, probably blocks exit of the E-site tRNA. The polypeptide is Small ribosomal subunit protein uS7 (Dehalococcoides mccartyi (strain ATCC BAA-2100 / JCM 16839 / KCTC 5957 / BAV1)).